The primary structure comprises 21 residues: Peptide Hact-2 (21 aa).

3 disulfides stabilise this stretch: Cys-1/Cys-18, Cys-5/Cys-14, and Cys-9/Cys-20.

As to expression, expressed in tentacles.

The protein resides in the nematocyst. Its subcellular location is the secreted. Its function is as follows. Peptide of unknown function. Does not exhibit antimicrobial activity against Escherichia coli and Staphylococcus aureus. Promotes cell proliferation of human fibroblast skin cells. Does not exhibit any effect on voltage-gated ion channels, including potassium, sodium, and calcium channels. The chain is Peptide Hact-2 from Heliofungia actiniformis (Mushroom coral).